The chain runs to 277 residues: Phosphatidylglycerol--prolipoprotein diacylglyceryl transferase (277 aa).

The next 4 membrane-spanning stretches (helical) occupy residues 16–36, 58–78, 93–113, and 119–139; these read LGPI…LFGW, FLTW…VLFY, IWSG…AILL, and GFSP…GLFL. R141 contacts a 1,2-diacyl-sn-glycero-3-phospho-(1'-sn-glycerol). The next 3 membrane-spanning stretches (helical) occupy residues 182–202, 207–227, and 239–259; these read AALE…KPAV, GTLS…GEVF, and FGVT…LWIL.

This sequence belongs to the Lgt family.

The protein resides in the cell inner membrane. It carries out the reaction L-cysteinyl-[prolipoprotein] + a 1,2-diacyl-sn-glycero-3-phospho-(1'-sn-glycerol) = an S-1,2-diacyl-sn-glyceryl-L-cysteinyl-[prolipoprotein] + sn-glycerol 1-phosphate + H(+). It participates in protein modification; lipoprotein biosynthesis (diacylglyceryl transfer). Functionally, catalyzes the transfer of the diacylglyceryl group from phosphatidylglycerol to the sulfhydryl group of the N-terminal cysteine of a prolipoprotein, the first step in the formation of mature lipoproteins. This is Phosphatidylglycerol--prolipoprotein diacylglyceryl transferase from Rhodospirillum centenum (strain ATCC 51521 / SW).